The primary structure comprises 755 residues: Xaa-Pro dipeptidyl-peptidase (755 aa).

Catalysis depends on charge relay system residues serine 348, aspartate 468, and histidine 498.

This sequence belongs to the peptidase S15 family. In terms of assembly, homodimer.

Its subcellular location is the cytoplasm. The catalysed reaction is Hydrolyzes Xaa-Pro-|- bonds to release unblocked, N-terminal dipeptides from substrates including Ala-Pro-|-p-nitroanilide and (sequentially) Tyr-Pro-|-Phe-Pro-|-Gly-Pro-|-Ile.. Removes N-terminal dipeptides sequentially from polypeptides having unsubstituted N-termini provided that the penultimate residue is proline. This Streptococcus thermophilus (strain ATCC BAA-250 / LMG 18311) protein is Xaa-Pro dipeptidyl-peptidase.